The primary structure comprises 430 residues: Histidine--tRNA ligase (430 aa).

This sequence belongs to the class-II aminoacyl-tRNA synthetase family. As to quaternary structure, homodimer.

Its subcellular location is the cytoplasm. It carries out the reaction tRNA(His) + L-histidine + ATP = L-histidyl-tRNA(His) + AMP + diphosphate + H(+). The polypeptide is Histidine--tRNA ligase (hisS) (Clostridium acetobutylicum (strain ATCC 824 / DSM 792 / JCM 1419 / IAM 19013 / LMG 5710 / NBRC 13948 / NRRL B-527 / VKM B-1787 / 2291 / W)).